Consider the following 371-residue polypeptide: Mannonate dehydratase (371 aa).

Belongs to the mannonate dehydratase family. It depends on Fe(2+) as a cofactor. The cofactor is Mn(2+).

The catalysed reaction is D-mannonate = 2-dehydro-3-deoxy-D-gluconate + H2O. Its pathway is carbohydrate metabolism; pentose and glucuronate interconversion. Functionally, catalyzes the dehydration of D-mannonate. The sequence is that of Mannonate dehydratase from Geobacillus thermodenitrificans (strain NG80-2).